Here is a 166-residue protein sequence, read N- to C-terminus: Salivary acidic proline-rich phosphoprotein 1/2 (166 aa).

An N-terminal signal peptide occupies residues 1-16 (MLLILLSVALLAFSSA). Residues 16 to 166 (AQDLDEDVSQ…QGPPQGQSPQ (151 aa)) are disordered. Q17 bears the Pyrrolidone carboxylic acid mark. The tract at residues 17 to 46 (QDLDEDVSQEDVPLVISDGGDSEQFIDEER) is inhibits hydroxyapatite formation, binds to hydroxyapatite and calcium. The residue at position 24 (S24) is a Phosphoserine; by FAM20C. Residue S33 is modified to Phosphoserine; alternate. O-linked (GlcA) serine; alternate glycosylation is found at S33 and S38. S38 carries the phosphoserine; by FAM20C; alternate modification. 2 stretches are compositionally biased toward low complexity: residues 48 to 61 (GPPL…PSAG) and 68 to 82 (GPQQ…QQQQ). 2 stretches are compositionally biased toward pro residues: residues 83–111 (GPPP…PQGP) and 137–159 (GPPP…PQGP).

Post-translationally, proteolytically cleaved; PRP-2, PRP-1, PIF-S and Db-S yield PRP-4, PRP-3 (protein A), PIF-F and Db-F, respectively. In terms of processing, a hexuronic acid was shown to be linked to Ser-33 in about 40% of the polypeptides. Neither the structure of the carbohydrate (whether glucuronic acid or an isomer of), nor the linkage (whether a glycoside or an ester) has been definitely established.

It localises to the secreted. Its function is as follows. PRP's act as highly potent inhibitors of crystal growth of calcium phosphates. They provide a protective and reparative environment for dental enamel which is important for the integrity of the teeth. The polypeptide is Salivary acidic proline-rich phosphoprotein 1/2 (PRH1) (Homo sapiens (Human)).